We begin with the raw amino-acid sequence, 273 residues long: Peptidyl-prolyl cis-trans isomerase E (273 aa).

One can recognise an RRM domain in the interval 1 to 48 (MPMDYQTEKHRGFAFVEFEEVEDAMSAIDNMNESEIFGRTIRVNVARP). The tract at residues 77–103 (RKLDEPDIVNPSDTSENVEDLSDEEMR) is disordered. Positions 115-271 (FFDIRIGNGD…EPVIISRCGE (157 aa)) constitute a PPIase cyclophilin-type domain.

Belongs to the cyclophilin-type PPIase family. PPIase E subfamily.

It is found in the cytoplasm. It carries out the reaction [protein]-peptidylproline (omega=180) = [protein]-peptidylproline (omega=0). With respect to regulation, binds cyclosporin A (CsA). CsA mediates some of its effects via an inhibitory action on PPIase. In terms of biological role, PPIases accelerate the folding of proteins. It catalyzes the cis-trans isomerization of proline imidic peptide bonds in oligopeptides. This Schistosoma mansoni (Blood fluke) protein is Peptidyl-prolyl cis-trans isomerase E.